Consider the following 122-residue polypeptide: Seminal vesicle secretory protein 5 (122 aa).

The first 21 residues, 1 to 21, serve as a signal peptide directing secretion; that stretch reads MSPTSFFLLTLLLVLVTEARG. Residues 23 to 122 form a disordered region; sequence RERFSQSAED…KTRVKSRILK (100 aa). The segment covering 27-37 has biased composition (polar residues); that stretch reads SQSAEDPSSSH.

Belongs to the SVP2/SVP5/SVP6 family. As to expression, testis.

Its subcellular location is the secreted. The protein localises to the extracellular space. The protein is Seminal vesicle secretory protein 5 (Svs5) of Mus musculus (Mouse).